A 262-amino-acid polypeptide reads, in one-letter code: Thiamine thiazole synthase (262 aa).

Residues serine 40, 59–60, glycine 67, valine 133, and 159–161 contribute to the NAD(+) site; these read ER and HID. Fe cation contacts are provided by aspartate 161 and histidine 176. NAD(+) is bound by residues serine 179 and methionine 226. Position 236 (arginine 236) interacts with glycine.

This sequence belongs to the THI4 family. Homooctamer; tetramer of dimers. Fe(2+) serves as cofactor.

The catalysed reaction is hydrogen sulfide + glycine + NAD(+) = ADP-5-ethyl-4-methylthiazole-2-carboxylate + nicotinamide + 3 H2O + H(+). Its pathway is cofactor biosynthesis; thiamine diphosphate biosynthesis. Its function is as follows. Involved in the biosynthesis of the thiazole moiety of thiamine. Catalyzes the conversion of NAD and glycine to adenosine diphosphate 5-(2-hydroxyethyl)-4-methylthiazole-2-carboxylate (ADT), an adenylated thiazole intermediate, using free sulfide as a source of sulfur. This is Thiamine thiazole synthase from Methanococcus maripaludis (strain C7 / ATCC BAA-1331).